The following is a 512-amino-acid chain: Ammonium transporter 2 (512 aa).

Residues 1–47 (MSSVNSIPTATSTVYISVLPATATPSGGSGGNVLHEDLNKFYDYGNT) lie on the Extracellular side of the membrane. Residues 48–68 (SWILACTPLCLIMVPGVAFFY) form a helical membrane-spanning segment. The Cytoplasmic segment spans residues 69 to 77 (SGLARRKNT). The helical transmembrane segment at 78–98 (LALIMLSMLGLCVSFFQWYFW) threads the bilayer. Residues 99–137 (GYSLAFSQTGTSGYIGNLRHFAFIRTLADYSPGSNNIPE) lie on the Extracellular side of the membrane. A helical transmembrane segment spans residues 138–158 (LVFANFQGMFAAITVALFTGA). Topologically, residues 159-167 (AAERGRIGP) are cytoplasmic. Residues 168–188 (MLIITFVWLTVVYCPIACWIW) form a helical membrane-spanning segment. At 189 to 201 (NPNGWAFKFGVYD) the chain is on the extracellular side. Residues 202–222 (FAGGGPVEVGSGFAALAYTVC) form a helical membrane-spanning segment. Residues 223-238 (LGRRSKFVEEQFRPHS) lie on the Cytoplasmic side of the membrane. Residues 239-259 (VLNVVLGTSLLWFGWLGFNGG) traverse the membrane as a helical segment. Over 260–267 (SAYGSNLR) the chain is Extracellular. Residues 268–288 (AAMAITNTNLAGAVAGLVWVI) form a helical membrane-spanning segment. The Cytoplasmic segment spans residues 289-300 (YDYIFRTRKWST). The helical transmembrane segment at 301–321 (IGFCSGVVAGLVAATPCAGFV) threads the bilayer. Residue S322 is a topological domain, extracellular. Residues 323–343 (PHASLAIGAITGLCCNWAIKL) traverse the membrane as a helical segment. Over 344 to 354 (KSHMRIDDAMD) the chain is Cytoplasmic. Residues 355 to 375 (IFAIHGVAGFVGTFLNGLFAV) traverse the membrane as a helical segment. The Extracellular segment spans residues 376 to 406 (DYIAAMDGIYVGENKIRGGWFDHHWRQLGLQ). A helical membrane pass occupies residues 407 to 427 (MAYICAVGAYDFVVTFIILFI). Topologically, residues 428-512 (TDKIPYLQLR…TNPLELGLTI (85 aa)) are cytoplasmic.

It belongs to the ammonia transporter channel (TC 1.A.11.2) family.

The protein resides in the membrane. Functionally, transporter for ammonium to use as a nitrogen source. The chain is Ammonium transporter 2 (amt2) from Schizosaccharomyces pombe (strain 972 / ATCC 24843) (Fission yeast).